The sequence spans 382 residues: Opsin Rh3 (382 aa).

The Extracellular segment spans residues 1–56; it reads MEYHNVSSVLGNVSSVLRPDARLSAESRLLGWNVPPDELRHIPEHWLIYPEPPESM. Asn12 carries an N-linked (GlcNAc...) asparagine glycan. Residues 57–81 form a helical membrane-spanning segment; it reads NYLLGTLYIFFTVISMIGNGLVMWV. Residues 82–93 lie on the Cytoplasmic side of the membrane; it reads FSAAKSLRTPSN. The chain crosses the membrane as a helical span at residues 94 to 118; that stretch reads ILVINLAFCDFMMMIKTPIFIYNSF. Topologically, residues 119–132 are extracellular; the sequence is HQGYALGHLGCQIF. Cysteines 129 and 206 form a disulfide. A helical transmembrane segment spans residues 133-152; the sequence is GVIGSYTGIAAGATNAFIAY. Residues 153–170 lie on the Cytoplasmic side of the membrane; it reads DRYNVITRPMEGKMTHGK. Residues 171-195 form a helical membrane-spanning segment; that stretch reads AIAMIIFIYLYATPWVVACYTESWG. Topologically, residues 196–219 are extracellular; it reads RFVPEGYLTSCTFDYLTDNFDTRL. A helical membrane pass occupies residues 220-247; it reads FVACIFFFSFVCPTTMITYYYSQIVGHV. Residues 248–283 are Cytoplasmic-facing; the sequence is FSHEKALRDQAKKMNVDSLRSNVDKSKEAAEIRIAK. A helical membrane pass occupies residues 284–307; it reads AAITICFLFFASWTPYGVMSLIGA. The Extracellular segment spans residues 308-315; sequence FGDKTLLT. A helical membrane pass occupies residues 316-340; that stretch reads PGATMIPACTCKMVACIDPFVYAIS. At Lys327 the chain carries N6-(retinylidene)lysine. The Cytoplasmic portion of the chain corresponds to 341 to 382; the sequence is HPRYRMELQKRCPWLAISEKAPESAAAISTSTTQEQQQTTAA.

It belongs to the G-protein coupled receptor 1 family. Opsin subfamily. In terms of processing, phosphorylated on some or all of the serine and threonine residues present in the C-terminal region.

It localises to the membrane. Its function is as follows. Visual pigments are the light-absorbing molecules that mediate vision. They consist of an apoprotein, opsin, covalently linked to cis-retinal. This chain is Opsin Rh3 (Rh3), found in Drosophila pseudoobscura pseudoobscura (Fruit fly).